The following is a 532-amino-acid chain: P granule abnormality protein 2 (532 aa).

Interacts with pgl-1 and pgl-3; association with either pgl-1 or pgl-3 is not required for P-granule localization. Highly expressed in the germline.

The protein resides in the cytoplasmic granule. Transient component of P-granule which is involved in germline development. In Caenorhabditis elegans, this protein is P granule abnormality protein 2.